Here is a 333-residue protein sequence, read N- to C-terminus: NAC domain-containing protein 26 (333 aa).

Residues 14 to 173 (LPPGFRFHPT…DWAVCRIFHK (160 aa)) enclose the NAC domain. A DNA-binding region spans residues 114 to 179 (IGMKKTLVFY…IFHKSSGIKK (66 aa)). The disordered stretch occupies residues 143-162 (ADASPPQPPPPPSSAEPPRQ). Pro residues predominate over residues 147–157 (PPQPPPPPSSA).

Forms homodimers. Forms heterodimers with NAC20. Forms heterodimers with NAC23. Expressed in developing seeds.

The protein resides in the nucleus. Its function is as follows. Transcription factor that acts redundantly with NAC20 to regulate the expression of genes involved in the biosynthesis of starch and storage proteins in grain. Directly binds to the promoters of starch synthase 1 (SS1), pullulanase (PUL), glutelin A1 (GLUA1), glutelins B4 and B5 (GLUB4 and GLUB5), alpha-globulin and 16 kDa prolamin, and activates their expression. Possesses transactivation activity in yeast. This Oryza sativa subsp. indica (Rice) protein is NAC domain-containing protein 26.